The following is a 463-amino-acid chain: UDP-N-acetylmuramoylalanine--D-glutamate ligase (463 aa).

Residue 126 to 132 (GSNGKST) participates in ATP binding.

The protein belongs to the MurCDEF family.

It is found in the cytoplasm. The enzyme catalyses UDP-N-acetyl-alpha-D-muramoyl-L-alanine + D-glutamate + ATP = UDP-N-acetyl-alpha-D-muramoyl-L-alanyl-D-glutamate + ADP + phosphate + H(+). It participates in cell wall biogenesis; peptidoglycan biosynthesis. Functionally, cell wall formation. Catalyzes the addition of glutamate to the nucleotide precursor UDP-N-acetylmuramoyl-L-alanine (UMA). The protein is UDP-N-acetylmuramoylalanine--D-glutamate ligase of Idiomarina loihiensis (strain ATCC BAA-735 / DSM 15497 / L2-TR).